The sequence spans 151 residues: Large ribosomal subunit protein uL13 (151 aa).

A disordered region spans residues 129-151 (SNHPHQAQKPETLTINTIPGGNN).

The protein belongs to the universal ribosomal protein uL13 family. Part of the 50S ribosomal subunit.

This protein is one of the early assembly proteins of the 50S ribosomal subunit, although it is not seen to bind rRNA by itself. It is important during the early stages of 50S assembly. This is Large ribosomal subunit protein uL13 from Gloeothece citriformis (strain PCC 7424) (Cyanothece sp. (strain PCC 7424)).